Here is a 388-residue protein sequence, read N- to C-terminus: tRNA-specific adenosine deaminase 1 (388 aa).

The A to I editase domain maps to 63-388; the sequence is CLATGVKCTP…PNGGNEFQWI (326 aa). H89 is a Zn(2+) binding site. Catalysis depends on E91, which acts as the Proton donor. R96 contributes to the 1D-myo-inositol hexakisphosphate binding site. Residues C144 and C201 each coordinate Zn(2+). Positions 204, 357, and 363 each coordinate 1D-myo-inositol hexakisphosphate.

The protein belongs to the ADAT1 family. The cofactor is 1D-myo-inositol hexakisphosphate. Zn(2+) is required as a cofactor.

The protein resides in the cytoplasm. It localises to the nucleus. The catalysed reaction is adenosine(37) in tRNA(Ala) + H2O + H(+) = inosine(37) in tRNA(Ala) + NH4(+). Functionally, deaminates adenosine-37 to inosine in tRNA-Ala. The chain is tRNA-specific adenosine deaminase 1 from Schizosaccharomyces pombe (strain 972 / ATCC 24843) (Fission yeast).